Consider the following 130-residue polypeptide: Small ribosomal subunit protein uS9 (130 aa).

The protein belongs to the universal ribosomal protein uS9 family.

The sequence is that of Small ribosomal subunit protein uS9 from Neisseria meningitidis serogroup C (strain 053442).